A 221-amino-acid polypeptide reads, in one-letter code: MAEISAKLVKELREKTGAGMMDCKKALNENDGDLQKAIEWLRQKGIASAEKKSGRTAAEGLVGSYIHTGGRVGVLVEVNCETDFVARGDKFQELVRSIAMQIAACPNVEFVKVEDIPAEIAEREKAIEMGRDDLANKPENIREKIVVGRIEKRLKELTLLDQPYIRDPNISVAELVKQSIAELGENIQVRRFTRFVLGEGIEKAESDFAAEVAAQAAAAQS.

The involved in Mg(2+) ion dislocation from EF-Tu stretch occupies residues 82 to 85 (TDFV).

Belongs to the EF-Ts family.

It localises to the cytoplasm. Associates with the EF-Tu.GDP complex and induces the exchange of GDP to GTP. It remains bound to the aminoacyl-tRNA.EF-Tu.GTP complex up to the GTP hydrolysis stage on the ribosome. The chain is Elongation factor Ts from Synechococcus elongatus (strain ATCC 33912 / PCC 7942 / FACHB-805) (Anacystis nidulans R2).